The chain runs to 612 residues: uncharacterized protein (612 aa).

Positions 39-100 form a coiled coil; that stretch reads ERDHNLWEIE…KNISVKDLDE (62 aa). The interval 219 to 241 is disordered; the sequence is PLSSGESLPKKEEEVTKSPSFTL. WD repeat units lie at residues 286 to 325, 337 to 376, 389 to 432, 434 to 470, 483 to 523, 526 to 565, and 574 to 612; these read TSTQ…NDNS, GHEG…TSDS, GHED…FKIR, DSKQ…LVSQ, AVKD…LLAE, ISKV…STLE, and EEIT…KYLP.

The protein localises to the cytoplasm. This is an uncharacterized protein from Schizosaccharomyces pombe (strain 972 / ATCC 24843) (Fission yeast).